The primary structure comprises 185 residues: Elongation factor P (185 aa).

This sequence belongs to the elongation factor P family.

The protein resides in the cytoplasm. It functions in the pathway protein biosynthesis; polypeptide chain elongation. Functionally, involved in peptide bond synthesis. Stimulates efficient translation and peptide-bond synthesis on native or reconstituted 70S ribosomes in vitro. Probably functions indirectly by altering the affinity of the ribosome for aminoacyl-tRNA, thus increasing their reactivity as acceptors for peptidyl transferase. This Streptococcus uberis (strain ATCC BAA-854 / 0140J) protein is Elongation factor P.